We begin with the raw amino-acid sequence, 546 residues long: Chaperonin GroEL (546 aa).

ATP-binding positions include 29–32 (TMGP), lysine 50, 86–90 (DGTTT), glycine 412, 476–478 (NAA), and aspartate 492.

The protein belongs to the chaperonin (HSP60) family. Forms a cylinder of 14 subunits composed of two heptameric rings stacked back-to-back. Interacts with the co-chaperonin GroES.

It is found in the cytoplasm. The catalysed reaction is ATP + H2O + a folded polypeptide = ADP + phosphate + an unfolded polypeptide.. Together with its co-chaperonin GroES, plays an essential role in assisting protein folding. The GroEL-GroES system forms a nano-cage that allows encapsulation of the non-native substrate proteins and provides a physical environment optimized to promote and accelerate protein folding. Functionally, may play a protective role against the defense mechanisms generated by the infected macrophages. The chain is Chaperonin GroEL from Legionella micdadei (Tatlockia micdadei).